A 343-amino-acid chain; its full sequence is Anthranilate phosphoribosyltransferase (343 aa).

5-phospho-alpha-D-ribose 1-diphosphate is bound by residues Gly-84, 87-88 (GD), Thr-92, 94-97 (NIST), 112-120 (KHGNRSVSS), and Ser-124. An anthranilate-binding site is contributed by Gly-84. Ser-96 is a binding site for Mg(2+). Asn-115 is a binding site for anthranilate. Anthranilate is bound at residue Arg-170. Residues Asp-229 and Glu-230 each coordinate Mg(2+).

The protein belongs to the anthranilate phosphoribosyltransferase family. As to quaternary structure, homodimer. Mg(2+) serves as cofactor.

The catalysed reaction is N-(5-phospho-beta-D-ribosyl)anthranilate + diphosphate = 5-phospho-alpha-D-ribose 1-diphosphate + anthranilate. The protein operates within amino-acid biosynthesis; L-tryptophan biosynthesis; L-tryptophan from chorismate: step 2/5. Its function is as follows. Catalyzes the transfer of the phosphoribosyl group of 5-phosphorylribose-1-pyrophosphate (PRPP) to anthranilate to yield N-(5'-phosphoribosyl)-anthranilate (PRA). This is Anthranilate phosphoribosyltransferase from Stenotrophomonas maltophilia (strain R551-3).